Here is a 375-residue protein sequence, read N- to C-terminus: Succinyl-diaminopimelate desuccinylase (375 aa).

His66 is a binding site for Zn(2+). The active site involves Asp68. Asp99 lines the Zn(2+) pocket. Residue Glu133 is the Proton acceptor of the active site. Zn(2+) is bound by residues Glu134, Glu162, and His348.

Belongs to the peptidase M20A family. DapE subfamily. Homodimer. Zn(2+) serves as cofactor. It depends on Co(2+) as a cofactor.

It catalyses the reaction N-succinyl-(2S,6S)-2,6-diaminopimelate + H2O = (2S,6S)-2,6-diaminopimelate + succinate. It functions in the pathway amino-acid biosynthesis; L-lysine biosynthesis via DAP pathway; LL-2,6-diaminopimelate from (S)-tetrahydrodipicolinate (succinylase route): step 3/3. In terms of biological role, catalyzes the hydrolysis of N-succinyl-L,L-diaminopimelic acid (SDAP), forming succinate and LL-2,6-diaminopimelate (DAP), an intermediate involved in the bacterial biosynthesis of lysine and meso-diaminopimelic acid, an essential component of bacterial cell walls. This Escherichia coli O1:K1 / APEC protein is Succinyl-diaminopimelate desuccinylase.